A 350-amino-acid polypeptide reads, in one-letter code: Phosphotriesterase-related protein (350 aa).

Residues H22, H24, E169, H201, H230, and D298 each coordinate a divalent metal cation.

The protein belongs to the metallo-dependent hydrolases superfamily. Phosphotriesterase family. The cofactor is a divalent metal cation.

This chain is Phosphotriesterase-related protein, found in Drosophila melanogaster (Fruit fly).